Reading from the N-terminus, the 209-residue chain is Molybdenum cofactor guanylyltransferase (209 aa).

GTP contacts are provided by residues 13 to 15, Lys-26, Asn-54, Asp-72, and Asp-107; that span reads LAG. Residue Asp-107 coordinates Mg(2+).

This sequence belongs to the MobA family. As to quaternary structure, monomer. The cofactor is Mg(2+).

The protein resides in the cytoplasm. The catalysed reaction is Mo-molybdopterin + GTP + H(+) = Mo-molybdopterin guanine dinucleotide + diphosphate. In terms of biological role, transfers a GMP moiety from GTP to Mo-molybdopterin (Mo-MPT) cofactor (Moco or molybdenum cofactor) to form Mo-molybdopterin guanine dinucleotide (Mo-MGD) cofactor. The chain is Molybdenum cofactor guanylyltransferase from Nitrobacter hamburgensis (strain DSM 10229 / NCIMB 13809 / X14).